Reading from the N-terminus, the 482-residue chain is CBL-interacting serine/threonine-protein kinase 23 (482 aa).

The segment covering 1–25 has biased composition (low complexity); it reads MASRTTPSRSTPSRSTPSGSSSGGR. Residues 1–29 form a disordered region; the sequence is MASRTTPSRSTPSRSTPSGSSSGGRTRVG. In terms of domain architecture, Protein kinase spans 31-286; sequence YELGRTLGEG…FAEVIENEWF (256 aa). Residues 37–45 and K60 each bind ATP; that span reads LGEGTFAKV. The active-site Proton acceptor is the D154. Positions 172–201 are activation loop; it reads DFGLSALPQQVREDGLLHTTCGTPNYVAPE. A Phosphoserine modification is found at S176. T190 carries the phosphothreonine modification. Positions 328–352 constitute an NAF domain; sequence KTPVTMNAFELISTSQGLNLGSLFE. The tract at residues 359–388 is PPI; that stretch reads KRKTRFTSKSSANEIVTKIEAAAAPMGFDV. The disordered stretch occupies residues 459 to 482; that stretch reads KEEGTDGGGTNGAMANRTIAKQST.

This sequence belongs to the protein kinase superfamily. CAMK Ser/Thr protein kinase family. SNF1 subfamily. As to quaternary structure, part of a K(+)-channel calcium-sensing kinase/phosphatase complex composed by a calcium sensor CBL (CBL1, CBL2, CBL3 or CBL9), a kinase CIPK (CIPK6, CIPK16 or CIPK23), a phosphatase PP2C (AIP1) and a K(+)-channel (AKT1). Interacts with AKT1, CBL1, CBL2, CBL3, CBL5, CBL8, CBL9 and NRT1.1. Requires Mn(2+) as cofactor. Autophosphorylated. In terms of tissue distribution, in seedlings, mostly in vascular bundles, and in roots, especially in cortex and endodermis cells. In adult plants, mostly expressed in flowers, and, to a lower extent, in roots, leaves, stems and siliques, particularly in vascular tissues. Also detected in guard cells and root hairs.

Its subcellular location is the cell membrane. The enzyme catalyses L-seryl-[protein] + ATP = O-phospho-L-seryl-[protein] + ADP + H(+). It catalyses the reaction L-threonyl-[protein] + ATP = O-phospho-L-threonyl-[protein] + ADP + H(+). In terms of biological role, CIPK serine-threonine protein kinases interact with CBL proteins. Binding of a CBL protein to the regulatory NAF domain of CIPK protein leads to activation of the kinase in a calcium-dependent manner. Downstream of CBL1, CBL2, CBL3 and CBL9, regulates by phosphorylation the K(+) conductance and uptake of AKT1 in low K(+) condition, in response to calcium signaling and during the stomatal opening regulation by monitoring the turgor pressure in guard cells. In response to low nitrate concentration, phosphorylates NRT1.1, switching it from a low-affinity nitrate transporter to a high-affinity transporter. Confers tolerance to low potassium conditions. Involved in drought sensitivity and leaf transpiration. The protein is CBL-interacting serine/threonine-protein kinase 23 (CIPK23) of Arabidopsis thaliana (Mouse-ear cress).